A 146-amino-acid polypeptide reads, in one-letter code: MTPAHLLILAAVCVSPLGASSSRPMPLNLYQFKNMIQCTVPSRSWWDFADYGCYCGRGGSGTPVDDLDRCCQVHDHCYNEAEKISGCWPYSKTYSYECSQGTLTCKGGNNACAAAVCDCDRLAAICFAGAPYNNNNYNIDLKARCQ.

The signal sequence occupies residues methionine 1–serine 21. Residues serine 22 to leucine 27 constitute a propeptide that is removed on maturation. 7 disulfides stabilise this stretch: cysteine 38-cysteine 98, cysteine 53-cysteine 145, cysteine 55-cysteine 71, cysteine 70-cysteine 126, cysteine 77-cysteine 119, cysteine 87-cysteine 112, and cysteine 105-cysteine 117. Ca(2+) contacts are provided by tyrosine 54, glycine 56, and glycine 58. Histidine 74 is an active-site residue. Aspartate 75 provides a ligand contact to Ca(2+). Aspartate 120 is an active-site residue.

It belongs to the phospholipase A2 family. Group I subfamily. D49 sub-subfamily. It depends on Ca(2+) as a cofactor. As to expression, expressed by the venom gland.

Its subcellular location is the secreted. The catalysed reaction is a 1,2-diacyl-sn-glycero-3-phosphocholine + H2O = a 1-acyl-sn-glycero-3-phosphocholine + a fatty acid + H(+). Its function is as follows. PLA2 catalyzes the calcium-dependent hydrolysis of the 2-acyl groups in 3-sn-phosphoglycerides. The chain is Acidic phospholipase A2 2 from Naja atra (Chinese cobra).